The chain runs to 12345 residues: Muscle-specific protein 300 kDa (12345 aa).

Disordered stretches follow at residues 1–68 (MADS…STVT) and 121–152 (WSDG…DAEN). The Cytoplasmic segment spans residues 1–12295 (MADSGGPGSK…GARFLGRVAR (12295 aa)). Positions 19 to 28 (AGGGGAGAAG) are enriched in gly residues. A compositionally biased stretch (basic and acidic residues) spans 45-60 (EQKSSREQVLEEEKSQ). Residues 249–273 (FKELENFLEGERTVREVPSADGVRT) form an LRR 1 repeat. Disordered stretches follow at residues 295–325 (EGYV…RSVD), 387–488 (TVQV…RKLI), and 504–526 (GKSN…GRPA). A compositionally biased stretch (low complexity) spans 299–321 (SPRDSPSWSRSSYSSERSSVTPP). Composition is skewed to polar residues over residues 387-404 (TVQV…STPQ) and 414-434 (TTKT…QTGP). Low complexity predominate over residues 462–484 (TITSTTTKSTSSSTSATSSSSTS). Over residues 511–520 (NDIDIDNDSD) the composition is skewed to acidic residues. Calponin-homology (CH) domains follow at residues 630–737 (RVQK…LYFQ) and 777–882 (QGAR…HKYP). Residues 823 to 847 (LVNLAELKKTSNRQRLETAFDVAES) form an LRR 2 repeat. A TPR 1 repeat occupies 919 to 952 (SSFPRDFGEYLLARSEVDAHLAAYNRLKQLIESQ). LRR repeat units lie at residues 1089-1112 (CCLI…YGHE), 1389-1411 (HLFH…IHQW), and 1616-1642 (LKDV…ILQR). A TPR 2 repeat occupies 1603–1636 (LEFRLDENAFYQSLKDVEKELQLEQQALNRNEDV). Residues 1903–1935 (TGWNQAYTETSDKLQALKGTQAVWSEFVDQKND) form an HAT 1 repeat. LRR repeat units follow at residues 2087-2109 (KQLD…IAEA) and 2558-2581 (QQQI…FGQA). The 125-residue stretch at 2109 to 2233 (AKRLKGEITK…SRWTAVHENA (125 aa)) folds into the Calponin-homology (CH) 3 domain. A TPR 3 repeat occupies 2663-2696 (ADRIQKYNLISQALREYADSKDKFSKELKKAEDL). The segment at 2699-2724 (AIPQQPRDETELHQASEKTRKTMEQL) is disordered. Over residues 2704 to 2724 (PRDETELHQASEKTRKTMEQL) the composition is skewed to basic and acidic residues. 3 LRR repeats span residues 2728-2751 (KLSL…IGEP), 2935-2959 (CRAL…VDEL), and 3030-3053 (SSDK…IDDC). A coiled-coil region spans residues 2894-2962 (EQELRRRSKE…KQKVDELRNL (69 aa)). A Spectrin 1 repeat occupies 3110 to 3207 (LWSQYEQSNE…AVSKALTSYI (98 aa)). One copy of the TPR 4 repeat lies at 3346–3379 (KAKVPTTDELYPTLATKKAALQNYKTQLQEITLH). LRR repeat units lie at residues 3370–3393 (KTQL…AVTL), 3437–3462 (LEKA…TFEK), 3530–3556 (LVKL…WMKN), and 3611–3634 (NLKL…SIAK). The Spectrin 2 repeat unit spans residues 3539–3633 (KWDEFDTIIE…LKNLCKESIA (95 aa)). Residues 3629-3662 (KESIAKYVNYVKDHESFDKDFDSFKQNLQSSVDE) form a TPR 5 repeat. An HAT 2 repeat occupies 3706–3739 (KLYGHTSPEGREIIRQQLRALRTLWDNYTDDLNS). The LRR 15 repeat unit spans residues 3748–3771 (LLQFNEFSIAQDQLTKWLKDVDKA). One copy of the Spectrin 3 repeat lies at 4177–4273 (SYQDILNQTV…YDQVGQDCAK (97 aa)). A TPR 6 repeat occupies 4360-4393 (EVMARDLANLHADFEKFGASLSDVKSGLENRLQQ). An HAT 3 repeat occupies 4371 to 4403 (ADFEKFGASLSDVKSGLENRLQQWNDYEINLDR). One copy of the Spectrin 4 repeat lies at 4611-4701 (FDEIADSLKS…GKLQKRAQNY (91 aa)). LRR repeat units follow at residues 4654–4676 (NDIN…LPEK) and 4742–4763 (EQIS…LADE). The HAT 4 repeat unit spans residues 4799–4830 (EWESLLTTISSTIEAIEARLQHWSEYEQLRDQ). The stretch at 4820–4919 (HWSEYEQLRD…VKELNNRWQQ (100 aa)) is one Spectrin 5 repeat. One copy of the LRR 18 repeat lies at 4839–4863 (DNNLHAIDLKEDLPKKRAQLDALKA). An HAT 5 repeat occupies 4894-4926 (ASGPELVTKYQQIFHKVKELNNRWQQYVTSHED). LRR repeat units follow at residues 5266-5289 (QIDI…EKQV) and 5333-5357 (SSVY…RDQH). The TPR 7 repeat unit spans residues 5645–5678 (SAEPEDCEIIEQEVALLQEEFDAYREALNKAKDY). LRR repeat units lie at residues 5761-5784 (SNAI…VMRR), 5820-5843 (PGTL…FETG), and 5979-6002 (TKFD…VNSH). One copy of the Spectrin 6 repeat lies at 5791 to 5895 (EHQQHHSLYE…DLNDVRQKLA (105 aa)). An HAT 6 repeat occupies 6088 to 6120 (SEWETLQTISRDARSSLESCLAAWQTFLQKFNK). 2 Spectrin repeats span residues 6321 to 6405 (RWND…DKLK) and 6424 to 6530 (AYHQ…RLLE). Coiled-coil stretches lie at residues 6356-6397 (MKTL…VNRL) and 6454-6484 (REQT…LNAK). One copy of the LRR 24 repeat lies at 6363 to 6387 (YKTLSNELKLKGNELEQLQSEARDL). One copy of the TPR 8 repeat lies at 6522–6555 (VQIKNRLLESLAKFQEYEDTLDSIMRNLETYEPI). LRR repeat units follow at residues 6531-6554 (SLAK…TYEP) and 6560-6587 (LDAP…LNNE). A coiled-coil region spans residues 6567–6597 (LELAQNQLRCAQEMQNKLNNEKSRLAAAVQA). The segment at 6631 to 6657 (EDLLDQKPPPKTRSSTGGVSTDDDKDE) is disordered. The stretch at 6660-6695 (VEIQVELSDVNEALLDPIAHERVKNYRRIVRLNSAH) is one TPR 9 repeat. An LRR 27 repeat occupies 7004–7026 (SALRNLNTENRNLSGVLKAELDR). The stretch at 7161 to 7195 (EMETATEGELRTTSLPVLEEQLAHYKKLLSDAENK) is one TPR 10 repeat. LRR repeat units follow at residues 7219 to 7242 (LKLN…IDDR), 7300 to 7318 (KELK…DDLP), 7319 to 7339 (ELQS…DQLA), and 7340 to 7361 (HLRQ…IIAF). Positions 7419-7457 (KNSITEQLQSLKNQLQNLRKAVESQRQKHQLQLESHKKM) form a coiled coil. Residues 7524–7547 (SSLLEMLSEGRSLVASLPHELEER) form an LRR 32 repeat. The stretch at 7644–7676 (TKLTNTLANAKTQQSELEKEAERWREYQQSIDR) is one HAT 7 repeat. Residues 7654-7687 (KTQQSELEKEAERWREYQQSIDRVKATIERTKFV) form a TPR 11 repeat. 3 LRR repeats span residues 7692–7714 (QNLA…VQSQ), 7752–7777 (QDLV…GFEN), and 7816–7840 (LREE…ILTF). A TPR 12 repeat occupies 7759–7792 (EQRRDNLQQLAEHWDGFENSLHAWEKALGRLEDK). Positions 7799-7935 (TVRSRRHLED…NSQVQQAAEE (137 aa)) form a coiled coil. The TPR 13 repeat unit spans residues 7878–7911 (SKDLEEIEQVFRRISQLQDKLNALHEQLQSVHVY). 4 LRR repeats span residues 8178 to 8201 (KISV…EWDQ), 8238 to 8264 (EKTL…HFRN), 8298 to 8321 (EQTL…IIQE), and 8354 to 8377 (DELL…SLDG). One copy of the TPR 14 repeat lies at 8431-8464 (QQGITMIANAMHGQKKRQQEIDEYQQHLLELEQW). An LRR 40 repeat occupies 8534–8557 (EQLQSIITILREQVTVATKRIFTI). 6 disordered regions span residues 8583 to 8616 (IKPP…EEEI), 8966 to 9023 (QKPT…LPAP), 9131 to 9158 (EFEP…QVVA), 9361 to 9459 (GKES…PDSD), 9502 to 9735 (LVED…TSIS), and 9769 to 9797 (TMQL…EQQL). Residues 8601–8611 (SNENTIDSSSM) are compositionally biased toward polar residues. Over residues 8982-9011 (TQVTTTTRTTTATTQEQEQPEQQTQPTTTE) the composition is skewed to low complexity. Basic and acidic residues predominate over residues 9136–9151 (SPHEESTKSDLVKPQE). Over residues 9394–9404 (KRRRKKKKRRD) the composition is skewed to basic residues. Residues 9410–9419 (ELEQEQETEP) are compositionally biased toward acidic residues. Over residues 9420–9439 (EPVAAVKEPEVSSDVPVSPE) the composition is skewed to low complexity. The segment covering 9440–9451 (DSPRDTVRHESI) has biased composition (basic and acidic residues). Polar residues-rich tracts occupy residues 9544 to 9563 (AVQT…SQTL), 9587 to 9597 (ISTTEIQTDVS), and 9605 to 9625 (EISS…TTPK). The segment covering 9658 to 9680 (TSEQSTVTETTTTTETHVQTTTP) has biased composition (low complexity). The span at 9681-9698 (EPREQTEVIKPETAHEET) shows a compositional bias: basic and acidic residues. Residues 9699-9721 (STVELVQFADGEMQTTPPGDQQP) form an LRR 41 repeat. The span at 9711–9735 (MQTTPPGDQQPASLDDSSLTATSIS) shows a compositional bias: polar residues. Over residues 9777-9788 (KKSKKDKKKKQK) the composition is skewed to basic residues. 4 LRR repeats span residues 9995 to 10019 (SNVL…ILEV), 10073 to 10096 (EEKL…VVQL), 10252 to 10276 (KEFT…SLEQ), and 10353 to 10376 (RDEL…TSAD). Coiled coils occupy residues 10072 to 10099 (SEEK…LERQ) and 10172 to 10257 (LSAK…FTKI). One copy of the TPR 15 repeat lies at 10231 to 10264 (QAERERVLQLQSLAEEYEQTLKEFTKITVLADKL). One copy of the HAT 8 repeat lies at 10426–10458 (IVLLKLREEVALYLHRLLVFKEIWVQYEQQTDK). LRR repeat units follow at residues 10512–10535 (EKSL…QLED), 10570–10593 (EREL…EEEL), and 10644–10667 (AEEL…ISNQ). The TPR 16 repeat unit spans residues 10854 to 10888 (VVAWNDTSENLQQLRTRYQRAVELWDKYRNASAAV). One copy of the HAT 9 repeat lies at 10855 to 10887 (VAWNDTSENLQQLRTRYQRAVELWDKYRNASAA). 2 LRR repeats span residues 10907–10929 (DALQ…ILEL) and 11021–11043 (AHLQ…HQNS). Residues 11016–11046 (LAALRAHLQTLARTEEQLRQLKERHQNSEVA) adopt a coiled-coil conformation. The stretch at 11070-11104 (DTFQEYHRLSTRLARSQNSSEALRLWRQYLQHVQS) is one HAT 10 repeat. One copy of the TPR 17 repeat lies at 11072-11105 (FQEYHRLSTRLARSQNSSEALRLWRQYLQHVQSF). An LRR 51 repeat occupies 11197–11222 (EAERNALQLRYIHLKRVPHLKHRLDA). Coiled-coil stretches lie at residues 11220–11247 (LDAM…LARH) and 11281–11308 (LQRV…AQKL). LRR repeat units follow at residues 11342 to 11365 (SALE…DMKT), 11398 to 11422 (LSNY…VEKD), 11670 to 11692 (EELE…LAMS), 11697 to 11720 (PENI…LTPR), and 11744 to 11766 (EATN…ENQQ). Positions 11655–11685 (KHKLEERQMELRAKLEELESQSVNLRQLEQI) form a coiled coil. Positions 11776–11806 (LQRLESLEKKLQDAQQHVQQADNLAQEAKTR) form a coiled coil. The stretch at 11804 to 11836 (KTRTKQQPQLKQLLELVSAYTTLWQTVQTRIVT) is one HAT 11 repeat. 2 LRR repeats span residues 11959–11981 (DTVA…RQQH) and 12198–12220 (SRLT…YIVK). The interval 12253-12272 (SMQAAAPNTENANNTDGGDA) is disordered. Residues 12256–12267 (AAAPNTENANNT) show a composition bias toward low complexity. The KASH domain maps to 12287-12345 (ARFLGRVARASLPIQALMLLLLGVATLVPHGEDYTCMFSNTFARSLEPMLSYPHGPPPT). Residues 12296 to 12316 (ASLPIQALMLLLLGVATLVPH) traverse the membrane as a helical; Anchor for type IV membrane protein segment. One copy of the LRR 59 repeat lies at 12301–12323 (QALMLLLLGVATLVPHGEDYTCM). Over 12317 to 12345 (GEDYTCMFSNTFARSLEPMLSYPHGPPPT) the chain is Perinuclear space.

Belongs to the nesprin family. As to quaternary structure, core component of LINC complexes which are composed of inner nuclear membrane SUN domain-containing proteins coupled to outer nuclear membrane KASH domain-containing nesprins. Interacts with klar; this interaction allows the anchoring of the Msp300 nuclear ring structure to the nuclear envelope. Interacts with sls; this interaction mediates the recruitment of Msp300 to the Z-disks.

It localises to the nucleus membrane. The protein resides in the cytoplasm. It is found in the myofibril. Its subcellular location is the sarcomere. The protein localises to the z line. It localises to the cytoskeleton. The protein resides in the microtubule organizing center. It is found in the perinuclear region. Its function is as follows. Component of the LINC (LInker of Nucleoskeleton and Cytoskeleton) complex involved in the connection between the nuclear lamina and the cytoskeleton. Collaborates with Klar to promote even spacing of the myonuclei at the periphery of striated muscle fibers by mediating a tight association between a nuclear ring structure of Msp300 and the plus ends of a unique astral MT network. In addition, is essential for anchoring nuclei, mitochondria and endoplasmic reticulum (ER) structures to the Z-disks. In fat body cells, part of perinuclear non-centrosomal microtubule-organizing centers (ncMTOCs) which function to accommodate the organization of microtubule (MT) networks to control nuclear positioning and dynein motor-based retrograde endosomal trafficking. Functions as the primary organizer of the ncMTOC by recruiting Patronin, shot and msps to the organizing centre. Within the ncMTOC, Msp300 and shot anchors the ncMTOC at the nuclear surface and recruits the MT minus-end regulators Patronin and Nin for assembly, anchoring and/or stabilization of circumferential and radial MTs at the ncMTOCs. Patronin, and perhaps Nin, recruits msps to the ncMTOC for the gamma-tubulin-independent elongation of radial MTs. The protein is Muscle-specific protein 300 kDa of Drosophila melanogaster (Fruit fly).